The primary structure comprises 98 residues: Small ribosomal subunit protein uS17 (98 aa).

The tract at residues 1–21 (MADQKGPKYTPAAEKPRGRRK) is disordered. Residue K96 forms an Isoglutamyl lysine isopeptide (Lys-Gln) (interchain with Q-Cter in protein Pup) linkage.

Belongs to the universal ribosomal protein uS17 family. As to quaternary structure, part of the 30S ribosomal subunit.

Functionally, one of the primary rRNA binding proteins, it binds specifically to the 5'-end of 16S ribosomal RNA. This is Small ribosomal subunit protein uS17 (rpsQ) from Mycolicibacterium smegmatis (strain ATCC 700084 / mc(2)155) (Mycobacterium smegmatis).